The chain runs to 165 residues: MAPNASCLCVHVRSEEWDLMTFDANPYDSVKKIKEHVRSKTKVPVQDQVLLLGSKILKPRRSLSSYGIDKEKTIHLTLKVVKPSDEELPLFLVESGDEAKRHLLQVRRSSSVAQVKAMIETKTGIIPETQIVTCNGKRLEDGKMMADYGIRKGNLLFLACYCIGG.

Ubiquitin-like domains are found at residues 6 to 81 (SCLC…LKVV) and 90 to 163 (LFLV…CYCI).

The protein belongs to the ubiquitin D family. In terms of assembly, interacts directly with the 26S proteasome. Interacts with NUB1; this interaction facilitates the linking of UBD-conjugated target protein to the proteasome complex and accelerates its own degradation and that of its conjugates. Interacts (via ubiquitin-like 1 domain) with the spindle checkpoint protein MAD2L1 during mitosis. Present in aggresomes of proteasome inhibited cells. Interacts with HDAC6 under proteasome impairment conditions. Forms a thioester with UBA6 in cells stimulated with tumor necrosis factor-alpha (TNFa) and interferon-gamma (IFNg). Interacts with SQSTM1 and TP53/p53. Post-translationally, can be acetylated. In terms of tissue distribution, constitutively expressed in mature dendritic cells and B-cells. Mostly expressed in the reticuloendothelial system (e.g. thymus, spleen), the gastrointestinal system, kidney, lung and prostate gland.

It localises to the nucleus. It is found in the cytoplasm. Ubiquitin-like protein modifier which can be covalently attached to target proteins and subsequently leads to their degradation by the 26S proteasome, in a NUB1-dependent manner. Conjugation to the target protein is activated by UBA6 via adenylation of its C-terminal glycine. Promotes the expression of the proteasome subunit beta type-9 (PSMB9/LMP2). Regulates TNF-alpha-induced and LPS-mediated activation of the central mediator of innate immunity NF-kappa-B by promoting TNF-alpha-mediated proteasomal degradation of ubiquitinated-I-kappa-B-alpha. Required for TNF-alpha-induced p65 nuclear translocation in renal tubular epithelial cells (RTECs). May be involved in dendritic cell (DC) maturation, the process by which immature dendritic cells differentiate into fully competent antigen-presenting cells that initiate T-cell responses. Mediates mitotic non-disjunction and chromosome instability, in long-term in vitro culture and cancers, by abbreviating mitotic phase and impairing the kinetochore localization of MAD2L1 during the prometaphase stage of the cell cycle. May be involved in the formation of aggresomes when proteasome is saturated or impaired. Mediates apoptosis in a caspase-dependent manner, especially in renal epithelium and tubular cells during renal diseases such as polycystic kidney disease and Human immunodeficiency virus (HIV)-associated nephropathy (HIVAN). This Homo sapiens (Human) protein is Ubiquitin D (UBD).